Reading from the N-terminus, the 507-residue chain is ATP synthase subunit alpha, chloroplastic (507 aa).

170–177 serves as a coordination point for ATP; that stretch reads GDRQTGKT. T257 carries the phosphothreonine modification.

This sequence belongs to the ATPase alpha/beta chains family. F-type ATPases have 2 components, CF(1) - the catalytic core - and CF(0) - the membrane proton channel. CF(1) has five subunits: alpha(3), beta(3), gamma(1), delta(1), epsilon(1). CF(0) has four main subunits: a, b, b' and c.

The protein resides in the plastid. It localises to the chloroplast thylakoid membrane. The catalysed reaction is ATP + H2O + 4 H(+)(in) = ADP + phosphate + 5 H(+)(out). In terms of biological role, produces ATP from ADP in the presence of a proton gradient across the membrane. The alpha chain is a regulatory subunit. The polypeptide is ATP synthase subunit alpha, chloroplastic (Draba nemorosa (Woodland whitlowgrass)).